The sequence spans 322 residues: Cyanophycinase (322 aa).

Active-site charge relay system residues include Ser-178, Glu-196, and His-220.

This sequence belongs to the peptidase S51 family.

The catalysed reaction is [L-4-(L-arginin-2-N-yl)aspartate](n) + H2O = [L-4-(L-arginin-2-N-yl)aspartate](n-1) + L-4-(L-arginin-2-N-yl)aspartate. In terms of biological role, exopeptidase that catalyzes the hydrolytic cleavage of multi-L-arginyl-poly-L-aspartic acid (cyanophycin; a water-insoluble reserve polymer) into aspartate-arginine dipeptides. The chain is Cyanophycinase (cphB) from Synechococcus elongatus.